The primary structure comprises 656 residues: Probable serine/threonine-protein kinase sky1 (656 aa).

Residues 1-127 (MSDIQQDSTS…KQGGYHPVRR (127 aa)) form a disordered region. The segment covering 16 to 48 (TSLGGTSLGGTSLGGTSLGGTSLGGTSLGGTSL) has biased composition (gly residues). Composition is skewed to low complexity over residues 49 to 64 (GGSTTTSTTTPKSTNS) and 72 to 89 (TSSNNNNNNNNNNNNNNE). Polar residues predominate over residues 96–108 (AGSSNKSFMPLNN). The region spanning 135 to 648 (YQVVDKLGWG…AKDCLNHTWL (514 aa)) is the Protein kinase domain. ATP is bound at residue 141–149 (LGWGHFSTV). The segment at 157 to 185 (TPITTSSSSSSTTTTTTSSSSNGNGNGNG) is disordered. Over residues 160 to 179 (TTSSSSSSTTTTTTSSSSNG) the composition is skewed to low complexity. Lys197 contacts ATP. The active-site Proton acceptor is Asp298. The tract at residues 330–454 (RTSSSNKQSQ…TTATATATTT (125 aa)) is disordered. A compositionally biased stretch (low complexity) spans 332–355 (SSSNKQSQQQQQPQQQQSQQNIND). Basic and acidic residues-rich tracts occupy residues 383 to 401 (SNRDRDNNKNKNIKKDDNK) and 413 to 440 (ENTDNKDLNSSEENKKEEEQQQNKKEEP). Residues 441-454 (TTTTTTATATATTT) are compositionally biased toward low complexity.

The protein belongs to the protein kinase superfamily. CMGC Ser/Thr protein kinase family.

It carries out the reaction L-seryl-[protein] + ATP = O-phospho-L-seryl-[protein] + ADP + H(+). The catalysed reaction is L-threonyl-[protein] + ATP = O-phospho-L-threonyl-[protein] + ADP + H(+). The chain is Probable serine/threonine-protein kinase sky1 (sky1) from Dictyostelium discoideum (Social amoeba).